A 411-amino-acid chain; its full sequence is Phosphopentomutase (411 aa).

The Mn(2+) site is built by Asp-14, Asp-306, His-311, Asp-347, His-348, and His-359.

This sequence belongs to the phosphopentomutase family. The cofactor is Mn(2+).

The protein resides in the cytoplasm. It carries out the reaction 2-deoxy-alpha-D-ribose 1-phosphate = 2-deoxy-D-ribose 5-phosphate. It catalyses the reaction alpha-D-ribose 1-phosphate = D-ribose 5-phosphate. The protein operates within carbohydrate degradation; 2-deoxy-D-ribose 1-phosphate degradation; D-glyceraldehyde 3-phosphate and acetaldehyde from 2-deoxy-alpha-D-ribose 1-phosphate: step 1/2. Its function is as follows. Isomerase that catalyzes the conversion of deoxy-ribose 1-phosphate (dRib-1-P) and ribose 1-phosphate (Rib-1-P) to deoxy-ribose 5-phosphate (dRib-5-P) and ribose 5-phosphate (Rib-5-P), respectively. This is Phosphopentomutase from Lactococcus lactis subsp. cremoris (strain MG1363).